The following is a 530-amino-acid chain: Probable basic-leucine zipper transcription factor L (530 aa).

Low complexity-rich tracts occupy residues 1 to 17 and 24 to 39; these read MYSP…SPES and SINN…ANQS. A disordered region spans residues 1-76; the sequence is MYSPSSPQSS…QSAALSRSRK (76 aa). In terms of domain architecture, bZIP spans 55 to 118; the sequence is VKKRQVRLLK…FETKSRLEFL (64 aa). The basic motif stretch occupies residues 56 to 77; it reads KKRQVRLLKNRQSAALSRSRKK. Residues 83-104 form a leucine-zipper region; the sequence is LESKAQELTHSTQELHVQYNKI. Disordered stretches follow at residues 142–177, 216–258, and 389–481; these read NNIK…TTPV, SQNK…SPTP, and HHHH…SQIN. Composition is skewed to low complexity over residues 149–176 and 220–247; these read RSNS…STTP and NNNN…NTTN. Polar residues predominate over residues 248-257; it reads LLDQQQQSPT. Residues 436 to 478 show a composition bias toward low complexity; that stretch reads SSSPSSSSTSSPSTSSPSTPKSMGFPSPIFIGSSGSGPSSSGS.

This sequence belongs to the bZIP family.

It is found in the nucleus. In terms of biological role, probable transcriptional regulator. In Dictyostelium discoideum (Social amoeba), this protein is Probable basic-leucine zipper transcription factor L (bzpL).